Consider the following 404-residue polypeptide: Glucose-1-phosphate adenylyltransferase (404 aa).

Alpha-D-glucose 1-phosphate-binding positions include tyrosine 99, glycine 164, 179–180 (EK), and serine 197.

This sequence belongs to the bacterial/plant glucose-1-phosphate adenylyltransferase family.

The enzyme catalyses alpha-D-glucose 1-phosphate + ATP + H(+) = ADP-alpha-D-glucose + diphosphate. The protein operates within capsule biogenesis; capsule polysaccharide biosynthesis. Its pathway is glycan biosynthesis; glycogen biosynthesis. Its function is as follows. Involved in the biosynthesis of ADP-glucose, a building block, required in the biosynthesis of maltose-1-phosphate (M1P) and in the elongation reactions to produce linear alpha-1,4-glucans. Catalyzes the reaction between ATP and alpha-D-glucose 1-phosphate (G1P) to produce pyrophosphate and ADP-Glc. This chain is Glucose-1-phosphate adenylyltransferase, found in Mycobacteroides abscessus (strain ATCC 19977 / DSM 44196 / CCUG 20993 / CIP 104536 / JCM 13569 / NCTC 13031 / TMC 1543 / L948) (Mycobacterium abscessus).